Reading from the N-terminus, the 475-residue chain is Tesmin (475 aa).

Residues S34 and S67 each carry the phosphoserine modification. The CRC domain occupies 263–372; the sequence is SGPALQGPPK…KCIACKNYEE (110 aa).

Belongs to the lin-54 family.

It localises to the cytoplasm. The protein localises to the nucleus. Functionally, may have a role in spermatogenesis. This chain is Tesmin, found in Rattus norvegicus (Rat).